The following is a 513-amino-acid chain: Cytochrome P450 705A1 (513 aa).

The helical transmembrane segment at 9–29 threads the bilayer; sequence QNCFIIILLCSFSLISYFVFF. Heme is bound at residue Cys448.

Belongs to the cytochrome P450 family. It depends on heme as a cofactor. Expressed in root stele, root cortex, root epidermis, root pericycle of the root hair zone, and quiescent center at the root meristematic zone.

Its subcellular location is the membrane. Cleaves the arabidiol side chain at C15 to form 14-apo-arabidiol and a side-chain fragment. Involved in the biosynthesis of the volatile homoterpene (E)-4,8-dimethyl-1,3,7-nonatriene (DMNT) in roots. Involved in the production of DMNT by degrading the triterpene arabidiol. May be involved in the defense again the fungal root pathogen Pythium irregulare by producing DMNT. The protein is Cytochrome P450 705A1 of Arabidopsis thaliana (Mouse-ear cress).